Here is a 429-residue protein sequence, read N- to C-terminus: Growth/differentiation factor 2 (429 aa).

The N-terminal stretch at 1-22 (MCPGALWVALPLLSLLAGSLQG) is a signal peptide. Positions 23 to 319 (KPLQSWGRGS…AGSTLARRKR (297 aa)) are excised as a propeptide. 2 N-linked (GlcNAc...) asparagine glycosylation sites follow: asparagine 71 and asparagine 136. A compositionally biased stretch (basic and acidic residues) spans 283-301 (VLKKLSKDGSTEAGESSHE). The tract at residues 283-308 (VLKKLSKDGSTEAGESSHEEDTDGHV) is disordered. 3 cysteine pairs are disulfide-bonded: cysteine 327-cysteine 393, cysteine 356-cysteine 426, and cysteine 360-cysteine 428. The interaction with ENG stretch occupies residues 402 to 416 (SVLYKDDMGVPTLKY).

It belongs to the TGF-beta family. As to quaternary structure, homodimer; disulfide-linked. Detected in extracellular fluid as mature homodimer, and in complex with its propeptide. Interacts with ACVRL1, BMPR2 and ACVR2B with high affinity (in vitro). Identified in a complex with ACVRL1 and ACVR2B. Has ten times lower affinity for ACVR2A (in vitro). Interacts with ENG, forming a heterotetramer with a 2:2 stoichiometry. Can form a heteromeric complex with ENG and ACVRL1. Interacts with type I receptor ACVR1. Post-translationally, a reversible disulfide bond can be formed between the two subunits in the homodimer; this has no effect on GDF2 activity. Detected in blood plasma (at protein level).

It localises to the secreted. Its function is as follows. Potent circulating inhibitor of angiogenesis. Signals through the type I activin receptor ACVRL1 but not other Alks. Signaling through SMAD1 in endothelial cells requires TGF-beta coreceptor endoglin/ENG. This is Growth/differentiation factor 2 (GDF2) from Homo sapiens (Human).